The following is an 828-amino-acid chain: Periplasmic nitrate reductase (828 aa).

The tat-type signal signal peptide spans 1 to 31; sequence MKLSRRSFMKANAVAAAAAAAGLSVPGVARA. A 4Fe-4S Mo/W bis-MGD-type domain is found at 39–95; that stretch reads IKWDKAPCRFCGTGCGVLVGTQQGRVVACQGDPDAPVNRGLNCIKGYFLPKIMYGKD. Residues cysteine 46, cysteine 49, cysteine 53, and cysteine 81 each contribute to the [4Fe-4S] cluster site. Mo-bis(molybdopterin guanine dinucleotide)-binding positions include lysine 83, glutamine 150, asparagine 175, cysteine 179, 212-219, 243-247, 262-264, methionine 372, glutamine 376, asparagine 482, 508-509, lysine 531, aspartate 558, and 718-727; these read WGSNMAEM, STFQH, QSD, SD, and TGRVLEHWHT. Substrate is bound at residue phenylalanine 794. Mo-bis(molybdopterin guanine dinucleotide) is bound by residues asparagine 802 and lysine 819.

Belongs to the prokaryotic molybdopterin-containing oxidoreductase family. NasA/NapA/NarB subfamily. Component of the periplasmic nitrate reductase NapAB complex composed of NapA and NapB. The cofactor is [4Fe-4S] cluster. Mo-bis(molybdopterin guanine dinucleotide) serves as cofactor. Predicted to be exported by the Tat system. The position of the signal peptide cleavage has not been experimentally proven.

It localises to the periplasm. It catalyses the reaction 2 Fe(II)-[cytochrome] + nitrate + 2 H(+) = 2 Fe(III)-[cytochrome] + nitrite + H2O. Its function is as follows. Catalytic subunit of the periplasmic nitrate reductase complex NapAB. Receives electrons from NapB and catalyzes the reduction of nitrate to nitrite. The polypeptide is Periplasmic nitrate reductase (Salmonella paratyphi C (strain RKS4594)).